A 207-amino-acid polypeptide reads, in one-letter code: Anthranilate synthase component II (207 aa).

The Glutamine amidotransferase type-1 domain occupies 17 to 207 (RVLFVDNFDS…DVIRNFLAGL (191 aa)). 66-68 (GPG) is an L-glutamine binding site. C96 (nucleophile; for GATase activity) is an active-site residue. 146-147 (SL) is an L-glutamine binding site. Catalysis depends on residues H187 and E189.

In terms of assembly, tetramer of two components I and two components II.

It catalyses the reaction chorismate + L-glutamine = anthranilate + pyruvate + L-glutamate + H(+). It functions in the pathway amino-acid biosynthesis; L-tryptophan biosynthesis; L-tryptophan from chorismate: step 1/5. This Haloarcula marismortui (strain ATCC 43049 / DSM 3752 / JCM 8966 / VKM B-1809) (Halobacterium marismortui) protein is Anthranilate synthase component II (trpG1).